The following is a 129-amino-acid chain: uncharacterized protein (129 aa).

This is an uncharacterized protein from Oryza sativa subsp. indica (Rice).